A 397-amino-acid polypeptide reads, in one-letter code: Subtilisin-like protease 3 (397 aa).

The N-terminal stretch at 1 to 19 (MGCIKVISVFLAAIAAVDA) is a signal peptide. Positions 20 to 116 (RAFFHNRGGS…VEHDRVVKLA (97 aa)) are excised as a propeptide. In terms of domain architecture, Inhibitor I9 spans 35–116 (SYIVVMKDGV…VEHDRVVKLA (82 aa)). The Peptidase S8 domain occupies 126–397 (TWGLGRVSHR…NRLLYNGSGQ (272 aa)). Residues aspartate 158 and histidine 189 each act as charge relay system in the active site. The N-linked (GlcNAc...) asparagine glycan is linked to asparagine 250. The Charge relay system role is filled by serine 344. Residue asparagine 393 is glycosylated (N-linked (GlcNAc...) asparagine).

It belongs to the peptidase S8 family.

Its subcellular location is the secreted. In terms of biological role, secreted subtilisin-like serine protease with keratinolytic activity that contributes to pathogenicity. The sequence is that of Subtilisin-like protease 3 (SUB3) from Trichophyton tonsurans (Scalp ringworm fungus).